A 1134-amino-acid polypeptide reads, in one-letter code: Protocadherin-18 (1134 aa).

Positions 1–27 are cleaved as a signal peptide; sequence MYQMNAKMHFTFVFALLVVSFNLDVLG. Cadherin domains follow at residues 28–137, 138–246, 247–354, 361–465, 466–576, and 582–697; these read KNLK…SPQF, SRSL…SPAF, EQQS…KPEI, PGKE…PPHF, QRSR…VPVV, and RNNT…APLD. The Extracellular portion of the chain corresponds to 28–699; it reads KNLKYRIYEE…SVSQAPLDVS (672 aa). N103 carries N-linked (GlcNAc...) asparagine glycosylation. The N-linked (GlcNAc...) asparagine glycan is linked to N269. N-linked (GlcNAc...) asparagine glycosylation occurs at N559. A helical transmembrane segment spans residues 700–720; that stretch reads MIIIISLGAICAVLLVIMVLF. Over 721-1134 the chain is Cytoplasmic; that stretch reads ATRCNREKKD…NKLLQDVRQS (414 aa). Disordered regions lie at residues 768–800, 868–888, and 941–1003; these read TLPI…NSHQ, SLKD…DLGR, and DYRS…TSSL. Residues 791-800 show a composition bias toward polar residues; sequence GSRQSHNSHQ. A compositionally biased stretch (basic and acidic residues) spans 868-877; the sequence is SLKDSGRGDS. The segment at 892–1134 is interaction with DAB1; sequence IDRLLGEGFS…NKLLQDVRQS (243 aa).

In terms of assembly, interacts with DAB1.

It is found in the cell membrane. Functionally, potential calcium-dependent cell-adhesion protein. This Bos taurus (Bovine) protein is Protocadherin-18 (PCDH18).